The following is a 123-amino-acid chain: Small ribosomal subunit protein uS12 (123 aa).

Aspartate 89 is modified (3-methylthioaspartic acid).

It belongs to the universal ribosomal protein uS12 family. In terms of assembly, part of the 30S ribosomal subunit. Contacts proteins S8 and S17. May interact with IF1 in the 30S initiation complex.

Functionally, with S4 and S5 plays an important role in translational accuracy. Its function is as follows. Interacts with and stabilizes bases of the 16S rRNA that are involved in tRNA selection in the A site and with the mRNA backbone. Located at the interface of the 30S and 50S subunits, it traverses the body of the 30S subunit contacting proteins on the other side and probably holding the rRNA structure together. The combined cluster of proteins S8, S12 and S17 appears to hold together the shoulder and platform of the 30S subunit. This Orientia tsutsugamushi (strain Ikeda) (Rickettsia tsutsugamushi) protein is Small ribosomal subunit protein uS12.